A 678-amino-acid chain; its full sequence is UvrABC system protein C (678 aa).

The region spanning 16-95 (VEPGVYRFRD…IKEFDPRFNI (80 aa)) is the GIY-YIG domain. The UVR domain maps to 208-243 (DRLIREMEQQMNAAAEELDFERAARLRDNIGAMRRA). The disordered stretch occupies residues 477 to 508 (HLRDAEAAPEGRPEQGPRASARPEQGPRASAR). The segment covering 479–491 (RDAEAAPEGRPEQ) has biased composition (basic and acidic residues).

It belongs to the UvrC family. Interacts with UvrB in an incision complex.

It is found in the cytoplasm. In terms of biological role, the UvrABC repair system catalyzes the recognition and processing of DNA lesions. UvrC both incises the 5' and 3' sides of the lesion. The N-terminal half is responsible for the 3' incision and the C-terminal half is responsible for the 5' incision. The protein is UvrABC system protein C of Mycolicibacterium vanbaalenii (strain DSM 7251 / JCM 13017 / BCRC 16820 / KCTC 9966 / NRRL B-24157 / PYR-1) (Mycobacterium vanbaalenii).